Here is a 595-residue protein sequence, read N- to C-terminus: Phytoene desaturase (595 aa).

Positions 1–23 are cleaved as a signal peptide; it reads MAETQRPRSAIIVGAGAGGIAVA. The chain crosses the membrane as a helical span at residues 574-594; it reads SQRAFPLLVALMGVLYFLLFV.

Belongs to the carotenoid/retinoid oxidoreductase family. It depends on NAD(+) as a cofactor.

It localises to the membrane. It carries out the reaction 15-cis-phytoene + A = all-trans-phytofluene + AH2. The enzyme catalyses all-trans-phytofluene + A = all-trans-zeta-carotene + AH2. It catalyses the reaction all-trans-zeta-carotene + A = all-trans-neurosporene + AH2. The catalysed reaction is all-trans-neurosporene + A = all-trans-lycopene + AH2. It carries out the reaction all-trans-lycopene + A = all-trans-3,4-didehydrolycopene + AH2. Its pathway is carotenoid biosynthesis; lycopene biosynthesis. Phytoene desaturase involved in the carotenoid biosynthesis pathway. Converts phytoene into 3,4-didehydrolycopene via the intermediates phytofluene, zeta-carotene, neurosporene and lycopene, by introducing up to five double bonds into phytoene. Is also able to desaturate 1-hydroxyneurosporene into 1-hydroxylycopene and 1-hydroxylycopene into 1-hydroxy-3,4-didehydrolycopene. Gamma-carotene and 1,19-dihydroxylycopene are not accepted as substrates. Neurosporaxanthin is synthesized from geranyl-geranyl pyrophosphate (GGPP) through several enzymatic activities. Phytoene synthase activity performed by the bifunctional enzyme al-2 first produces phytoene from geranyl-geranyl pyrophosphate (GGPP). The phytoene dehydrogenase al-1 then introduces 5 desaturations to lead to 3,4-didehydrolycopene via the intermediates phytofluene, zeta-carotene, neurosporene and lycopene. Al-2 cyclase activity then converts 3,4-didehydrolycopene into torulene. Al-2 can also convet lycopene into gamma-carotene which in turn is converted to beta-carotene by an additional al-2 cyclization reaction. Torulene is the substrate of the dioxidase cao-2 that breaks the molecule, removing five carbon atoms to yield beta-apo-4'-carotenal, whereas the aldehyde dehydrogenase ylo-1 mediates the last step by converting beta-apo-4'-carotenal into neurosporaxanthin. This Neurospora crassa (strain ATCC 24698 / 74-OR23-1A / CBS 708.71 / DSM 1257 / FGSC 987) protein is Phytoene desaturase.